We begin with the raw amino-acid sequence, 356 residues long: Heme A synthase (356 aa).

The next 5 membrane-spanning stretches (helical) occupy residues 24–44, 106–126, 139–159, 174–194, and 214–234; these read IAIW…VGGV, FHRL…VYFM, LLGI…MVMS, AHLG…TGLI, and AWML…VAGI. Position 276 (histidine 276) interacts with heme. The next 3 membrane-spanning stretches (helical) occupy residues 278 to 298, 309 to 329, and 331 to 351; these read LIAW…KQLS, LLLL…LLSV, and LTFA…ALWV. Histidine 337 lines the heme pocket.

It belongs to the COX15/CtaA family. Type 2 subfamily. Interacts with CtaB. It depends on heme b as a cofactor.

The protein resides in the cell membrane. It carries out the reaction Fe(II)-heme o + 2 A + H2O = Fe(II)-heme a + 2 AH2. The protein operates within porphyrin-containing compound metabolism; heme A biosynthesis; heme A from heme O: step 1/1. In terms of biological role, catalyzes the conversion of heme O to heme A by two successive hydroxylations of the methyl group at C8. The first hydroxylation forms heme I, the second hydroxylation results in an unstable dihydroxymethyl group, which spontaneously dehydrates, resulting in the formyl group of heme A. The sequence is that of Heme A synthase from Nitrosomonas eutropha (strain DSM 101675 / C91 / Nm57).